A 211-amino-acid polypeptide reads, in one-letter code: ATP phosphoribosyltransferase (211 aa).

Belongs to the ATP phosphoribosyltransferase family. Short subfamily. As to quaternary structure, heteromultimer composed of HisG and HisZ subunits.

It localises to the cytoplasm. The catalysed reaction is 1-(5-phospho-beta-D-ribosyl)-ATP + diphosphate = 5-phospho-alpha-D-ribose 1-diphosphate + ATP. It participates in amino-acid biosynthesis; L-histidine biosynthesis; L-histidine from 5-phospho-alpha-D-ribose 1-diphosphate: step 1/9. In terms of biological role, catalyzes the condensation of ATP and 5-phosphoribose 1-diphosphate to form N'-(5'-phosphoribosyl)-ATP (PR-ATP). Has a crucial role in the pathway because the rate of histidine biosynthesis seems to be controlled primarily by regulation of HisG enzymatic activity. This Sorangium cellulosum (strain So ce56) (Polyangium cellulosum (strain So ce56)) protein is ATP phosphoribosyltransferase.